The primary structure comprises 558 residues: Protein SET DOMAIN GROUP 41 (558 aa).

The 135-residue stretch at 115–249 (PSISVAIHHA…SGEEITVSYI (135 aa)) folds into the SET domain.

This sequence belongs to the class V-like SAM-binding methyltransferase superfamily.

The sequence is that of Protein SET DOMAIN GROUP 41 (SDG41) from Arabidopsis thaliana (Mouse-ear cress).